The primary structure comprises 341 residues: Serine proteinase inhibitor 2 (341 aa).

Belongs to the serpin family. Poxviruses subfamily.

It localises to the host cytoplasm. Viral serpin that inhibits both cysteine and serine proteinases involved in the regulation of host inflammatory and apoptosis processes. Major anti-apoptotic protein which inhibits both intrinsic and extrinsic pathways and strongly cleaves host CASP1 and CASP8 but is a rather poor inhibitor of host CASP3. Prevents the proteolytic activity of host interleukin-1-beta converting enzyme (ICE) and ICE-like enzymes. Can also block apoptosis through host tumor necrosis factor (TNF) receptor. The protein is Serine proteinase inhibitor 2 (OPG199) of Bos taurus (Bovine).